We begin with the raw amino-acid sequence, 301 residues long: ATP synthase gamma chain (301 aa).

The protein belongs to the ATPase gamma chain family. As to quaternary structure, F-type ATPases have 2 components, CF(1) - the catalytic core - and CF(0) - the membrane proton channel. CF(1) has five subunits: alpha(3), beta(3), gamma(1), delta(1), epsilon(1). CF(0) has three main subunits: a, b and c.

It localises to the cell inner membrane. Functionally, produces ATP from ADP in the presence of a proton gradient across the membrane. The gamma chain is believed to be important in regulating ATPase activity and the flow of protons through the CF(0) complex. The polypeptide is ATP synthase gamma chain (Bordetella avium (strain 197N)).